Here is a 229-residue protein sequence, read N- to C-terminus: Flagellar L-ring protein (229 aa).

Residues 1–23 (MSPLTRIALALAASAALVLALTA) form the signal peptide. The N-palmitoyl cysteine moiety is linked to residue cysteine 24. Cysteine 24 is lipidated: S-diacylglycerol cysteine.

This sequence belongs to the FlgH family. As to quaternary structure, the basal body constitutes a major portion of the flagellar organelle and consists of four rings (L,P,S, and M) mounted on a central rod.

The protein resides in the cell outer membrane. It localises to the bacterial flagellum basal body. Functionally, assembles around the rod to form the L-ring and probably protects the motor/basal body from shearing forces during rotation. The protein is Flagellar L-ring protein of Anaeromyxobacter dehalogenans (strain 2CP-C).